The chain runs to 162 residues: Beta-carotene hydroxylase (162 aa).

In terms of domain architecture, Fatty acid hydroxylase spans V8 to F135.

This sequence belongs to the sterol desaturase family.

The enzyme catalyses all-trans-beta-carotene + 4 reduced [2Fe-2S]-[ferredoxin] + 2 O2 + 4 H(+) = all-trans-zeaxanthin + 4 oxidized [2Fe-2S]-[ferredoxin] + 2 H2O. Its pathway is carotenoid biosynthesis; astaxanthin biosynthesis. Functionally, catalyzes the hydroxylation reaction from beta-carotene to zeaxanthin via beta-cryptoxanthin. This is Beta-carotene hydroxylase (crtZ) from Paracoccus sp. (strain N81106 / MBIC 01143) (Agrobacterium aurantiacum).